The following is a 441-amino-acid chain: Transducin-like enhancer protein 7 (441 aa).

Disordered regions lie at residues 1-77 (MSGE…QWHL) and 91-119 (PDAQ…SSSS). Residues 27 to 49 (ESSGVSSQPEPQVQQQLGSLLGV) are compositionally biased toward low complexity. Positions 62–76 (PADQETSTVTQQQWH) are enriched in polar residues. Residues 108–119 (GSEVGQPYSSSS) show a composition bias toward low complexity. WD repeat units lie at residues 156-194 (FHGK…AGEK), 204-243 (HPQD…QVRA), 247-285 (STGP…LIRK), 286-325 (HEVP…RLHQ), and 409-441 (EESS…QLLY).

This sequence belongs to the WD repeat Groucho/TLE family.

The polypeptide is Transducin-like enhancer protein 7 (Homo sapiens (Human)).